Consider the following 59-residue polypeptide: Large ribosomal subunit protein bL33 (59 aa).

The protein belongs to the bacterial ribosomal protein bL33 family.

This chain is Large ribosomal subunit protein bL33, found in Borrelia turicatae (strain 91E135).